The following is a 262-amino-acid chain: Plant intracellular Ras-group-related LRR protein 7 (262 aa).

LRR repeat units follow at residues 19–42 (WRST…VLQV), 43–66 (GNSL…VGTL), 68–89 (NMQR…IGYL), 90–112 (RNLK…LGSL), 113–135 (SNLQ…VGDL), 137–158 (NMLL…IGGC), 159–181 (SSLE…ICNL), 182–204 (VCLK…LLKD), and 206–231 (KALQ…GFTE).

The protein belongs to the SHOC2 family. As to expression, widely expressed and preferentially in leaf sheathes.

Functionally, leucine-rich repeat protein that likely mediates protein interactions, possibly in the context of signal transduction. This is Plant intracellular Ras-group-related LRR protein 7 (IRL7) from Oryza sativa subsp. japonica (Rice).